Reading from the N-terminus, the 506-residue chain is Procardosin-B (506 aa).

Positions 1-24 (MGTPIKASLLALFLFFLLSPTAFS) are cleaved as a signal peptide. The propeptide occupies 25–70 (VSNGGLLRVGLKKRKVDRLDQLRAHGVHMLGNARKDFGFRRTLSDS). In terms of domain architecture, Peptidase A1 spans 85 to 503 (YYGEIGIGTP…DYGKLRVGFA (419 aa)). Asp-103 is a catalytic residue. Cys-116 and Cys-122 are oxidised to a cystine. Residues Asn-139 and Asn-252 are each glycosylated (N-linked (GlcNAc...) asparagine). A disulfide bridge links Cys-281 with Cys-285. Asp-290 is an active-site residue. In terms of domain architecture, Saposin B-type spans 315–417 (VLNQQCKTLV…NEVCDQLPTS (103 aa)). 4 disulfide bridges follow: Cys-320–Cys-411, Cys-345–Cys-383, Cys-351–Cys-380, and Cys-425–Cys-462. N-linked (GlcNAc...) asparagine glycosylation occurs at Asn-397.

The protein belongs to the peptidase A1 family. Heterodimer of a light chain and a heavy chain. An intermediate form is produced first, and undergoes proteolytic processing to remove the internal plant-specific insert (PSI) and the propeptide. Detected in pistils, but not in seeds, bracts, midribs, roots, leaves or stamen extracts. Detected in seeds. In stigmas and styles, detected in the transmitting tissue and in contiguous subepidermal layers at the longitudenal grooves of the stigma (at protein level).

The protein resides in the microsome membrane. Its subcellular location is the protein storage vacuole. It localises to the secreted. The protein localises to the cell wall. It is found in the extracellular space. The protein resides in the extracellular matrix. With respect to regulation, inhibited by the specific aspartic proteinase inhibitors diazoacetyl-noleucine methyl ester and pepstatin. In terms of biological role, aspartic protease. Cleaves alpha-lactalbumin but not beta-lactoglobulin. In Cynara cardunculus (Cardoon), this protein is Procardosin-B.